The chain runs to 125 residues: Small ribosomal subunit protein eS8 (125 aa).

The interval 1–30 (MTIFQGRATRKPSGGKLRPNHSKRRYELGR) is disordered.

This sequence belongs to the eukaryotic ribosomal protein eS8 family. Part of the 30S ribosomal subunit.

This is Small ribosomal subunit protein eS8 from Picrophilus torridus (strain ATCC 700027 / DSM 9790 / JCM 10055 / NBRC 100828 / KAW 2/3).